Consider the following 239-residue polypeptide: EALYDICFRTLKLVTPTFGDLNHLISATMSGVTCCLRFPGQLNSDLRKLAVNLIPFPRLHFFMVGFAPLTSRGSQQYRALTVPELTQQMWDAKNMMCAADPRHGRYLTASAMFRGKMSTKEVDEQLINVQNKNSSYFVEWIPNNVKSSVCDIPPVGLKMACTFIGNSSSIQEMFRRDATSLTAMFRRKAFLHWYTWEGMDEMEFTEEESNMNDLVSEYQQYQDASAEPXXEQEEDYEEA.

Asn22 contributes to the GTP binding site. Residues 207 to 239 (EESNMNDLVSEYQQYQDASAEPXXEQEEDYEEA) are disordered. The segment covering 230–239 (XEQEEDYEEA) has biased composition (acidic residues).

This sequence belongs to the tubulin family. As to quaternary structure, dimer of alpha and beta chains. A typical microtubule is a hollow water-filled tube with an outer diameter of 25 nm and an inner diameter of 15 nM. Alpha-beta heterodimers associate head-to-tail to form protofilaments running lengthwise along the microtubule wall with the beta-tubulin subunit facing the microtubule plus end conferring a structural polarity. Microtubules usually have 13 protofilaments but different protofilament numbers can be found in some organisms and specialized cells. Requires Mg(2+) as cofactor.

The protein localises to the cytoplasm. It is found in the cytoskeleton. Tubulin is the major constituent of microtubules, a cylinder consisting of laterally associated linear protofilaments composed of alpha- and beta-tubulin heterodimers. Microtubules grow by the addition of GTP-tubulin dimers to the microtubule end, where a stabilizing cap forms. Below the cap, tubulin dimers are in GDP-bound state, owing to GTPase activity of alpha-tubulin. The chain is Tubulin beta-3 chain (TUBB3) from Anemia phyllitidis (Fern).